We begin with the raw amino-acid sequence, 294 residues long: Farnesyl diphosphate synthase (294 aa).

Residues lysine 45, arginine 48, and histidine 77 each contribute to the isopentenyl diphosphate site. The Mg(2+) site is built by aspartate 84 and aspartate 90. Arginine 95 lines the (2E)-geranyl diphosphate pocket. Arginine 96 is a binding site for isopentenyl diphosphate. Residues lysine 181, threonine 182, and glutamine 220 each coordinate (2E)-geranyl diphosphate.

The protein belongs to the FPP/GGPP synthase family. Requires Mg(2+) as cofactor.

It is found in the cytoplasm. It carries out the reaction isopentenyl diphosphate + (2E)-geranyl diphosphate = (2E,6E)-farnesyl diphosphate + diphosphate. This chain is Farnesyl diphosphate synthase (ispA), found in Buchnera aphidicola subsp. Schizaphis graminum (strain Sg).